The primary structure comprises 239 residues: Probable transcriptional regulatory protein LMOf2365_0385 (239 aa).

It belongs to the TACO1 family. YeeN subfamily.

It localises to the cytoplasm. This chain is Probable transcriptional regulatory protein LMOf2365_0385, found in Listeria monocytogenes serotype 4b (strain F2365).